The chain runs to 719 residues: Pesticidal crystal protein Cry1Ia (719 aa).

It belongs to the delta endotoxin family.

Its function is as follows. Promotes colloidosmotic lysis by binding to the midgut epithelial cells of certain coleopteran and lepidopteran species. Active on Plutella xylostella and Bombyx mori. The polypeptide is Pesticidal crystal protein Cry1Ia (cry1Ia) (Bacillus thuringiensis subsp. kurstaki).